The primary structure comprises 259 residues: Deoxyribose-phosphate aldolase (259 aa).

Catalysis depends on Asp102, which acts as the Proton donor/acceptor. Lys167 acts as the Schiff-base intermediate with acetaldehyde in catalysis. Lys201 functions as the Proton donor/acceptor in the catalytic mechanism.

The protein belongs to the DeoC/FbaB aldolase family. DeoC type 2 subfamily.

The protein localises to the cytoplasm. The enzyme catalyses 2-deoxy-D-ribose 5-phosphate = D-glyceraldehyde 3-phosphate + acetaldehyde. Its pathway is carbohydrate degradation; 2-deoxy-D-ribose 1-phosphate degradation; D-glyceraldehyde 3-phosphate and acetaldehyde from 2-deoxy-alpha-D-ribose 1-phosphate: step 2/2. Its function is as follows. Catalyzes a reversible aldol reaction between acetaldehyde and D-glyceraldehyde 3-phosphate to generate 2-deoxy-D-ribose 5-phosphate. The sequence is that of Deoxyribose-phosphate aldolase from Escherichia coli O1:K1 / APEC.